Consider the following 549-residue polypeptide: Cation/acetate symporter ActP (549 aa).

A run of 13 helical transmembrane segments spans residues 33–53 (WQAIIMFLIFVVFTLGITYWA), 77–97 (LAIAGDYMSAASFLGISALVF), 103–123 (GLIYSLGFLVGWPIILFLIAE), 148–168 (ILSACGSLVVVALYLIAQMVG), 183–203 (IAVVLVGVLMMMYVLFGGMLA), 206–226 (WVQIIKAVLLLFGASFMAFMV), 262–282 (ISALSLGLGLMFGTAGLPHIL), 303–323 (GFMGYFYILTFIIGFGAIMLV), 355–375 (LFLGFISAVAFATILAVVAGL), 404–424 (VSKITVLVLGVIAIILGVLFE), 428–448 (IAFMVGLAFAIAASCNFPIIL), 464–484 (GGWLGLLTAVVLMILGPTIWV), and 493–513 (IFPYEYPALFSISVAFLGIWF).

This sequence belongs to the sodium:solute symporter (SSF) (TC 2.A.21) family.

The protein localises to the cell inner membrane. Transports acetate. The sequence is that of Cation/acetate symporter ActP from Salmonella gallinarum (strain 287/91 / NCTC 13346).